Here is a 152-residue protein sequence, read N- to C-terminus: Snaclec coagulation factor IX/factor X-binding protein subunit A (152 aa).

An N-terminal signal peptide occupies residues 1-23; the sequence is MGRFIFLSFGLLVVFLSLSGTGA. 3 disulfide bridges follow: cysteine 25–cysteine 36, cysteine 53–cysteine 150, and cysteine 125–cysteine 142. Residues 32-151 form the C-type lectin domain; sequence YEGHCYNIFH…CGERNPFVCE (120 aa). Residues serine 64, glutamate 66, and glutamate 70 each contribute to the Ca(2+) site. Glutamate 151 provides a ligand contact to Ca(2+).

It belongs to the snaclec family. Heterodimer of subunits A and B; disulfide-linked. As to expression, expressed by the venom gland.

The protein resides in the secreted. In terms of biological role, anticoagulant protein which binds to the gamma-carboxyglutamic acid-domain regions of factors IX (F9) and factor X (F10) in the presence of calcium with a 1 to 1 stoichiometry. This is Snaclec coagulation factor IX/factor X-binding protein subunit A from Gloydius halys (Chinese water mocassin).